A 315-amino-acid polypeptide reads, in one-letter code: Porphobilinogen deaminase (315 aa).

Cys-241 carries the S-(dipyrrolylmethanemethyl)cysteine modification.

It belongs to the HMBS family. In terms of assembly, monomer. It depends on dipyrromethane as a cofactor.

It catalyses the reaction 4 porphobilinogen + H2O = hydroxymethylbilane + 4 NH4(+). Its pathway is porphyrin-containing compound metabolism; protoporphyrin-IX biosynthesis; coproporphyrinogen-III from 5-aminolevulinate: step 2/4. Tetrapolymerization of the monopyrrole PBG into the hydroxymethylbilane pre-uroporphyrinogen in several discrete steps. This Nitratidesulfovibrio vulgaris (strain DP4) (Desulfovibrio vulgaris) protein is Porphobilinogen deaminase.